A 188-amino-acid polypeptide reads, in one-letter code: Transcription factor FapR (188 aa).

The protein belongs to the FapR family.

In terms of biological role, transcriptional factor involved in regulation of membrane lipid biosynthesis by repressing genes involved in fatty acid and phospholipid metabolism. The sequence is that of Transcription factor FapR from Bacillus velezensis (strain DSM 23117 / BGSC 10A6 / LMG 26770 / FZB42) (Bacillus amyloliquefaciens subsp. plantarum).